We begin with the raw amino-acid sequence, 146 residues long: Protein MucA (146 aa).

Residues Ser-62 and Lys-99 each act as for autocatalytic cleavage activity in the active site.

It belongs to the peptidase S24 family.

Functionally, involved in UV protection and mutation. This is Protein MucA (mucA) from Escherichia coli.